We begin with the raw amino-acid sequence, 196 residues long: Putative 3-methyladenine DNA glycosylase (196 aa).

This sequence belongs to the DNA glycosylase MPG family.

In Bacillus licheniformis (strain ATCC 14580 / DSM 13 / JCM 2505 / CCUG 7422 / NBRC 12200 / NCIMB 9375 / NCTC 10341 / NRRL NRS-1264 / Gibson 46), this protein is Putative 3-methyladenine DNA glycosylase.